Reading from the N-terminus, the 276-residue chain is Bifunctional esterase/perhydrolase DCH (276 aa).

The region spanning 23-254 is the AB hydrolase-1 domain; the sequence is PVIFFHHGWP…NGKLISYPGF (232 aa). Active-site residues include Ser-97, Asp-227, and His-256.

The protein belongs to the AB hydrolase superfamily. Bacterial non-heme haloperoxidase / perhydrolase family. Homodimer.

The enzyme catalyses 3,4-dihydrocoumarin + H2O = 3-(2-hydroxyphenyl)propanoate + H(+). It carries out the reaction peracetic acid + H2O = acetate + H2O2 + H(+). It catalyses the reaction a percarboxylic acid + H2O = a carboxylate + H2O2 + H(+). With respect to regulation, inhibited by the serine protease inhibitors diisopropyl fluorophosphate and phenylmethanesulfonyl fluoride. Its function is as follows. Multifunctional enzyme, which shows esterase and perhydrolase activities, and is capable of organic acid-assisted bromination of organic compounds. Catalyzes the hydrolysis of 3,4-dihydrocoumarin. Aromatic lactones other than 3,4-dihydrocoumarin, such as 2-coumaranone and homogentisic acid lactone, are also substrates, but their activities relative to that of 3,4-dihydrocoumarin are quite low. Also catalyzes the hydrolysis of several linear esters, with specificity toward methyl esters. In addition, shows perhydrolase activity and catalyzes the dose- and time-dependent degradation of peracetic acid, a broad-spectrum biocide, to acetic acid and hydrogen peroxide. It suggests that in vivo DCH may play a role in the oxidative stress defense system and detoxify peroxoacids in conjunction with the catalase, i.e. peroxoacids are first hydrolyzed to the corresponding acids and hydrogen peroxide by DCH, and then the resulting hydrogen peroxide is degraded by the catalase. Also shows organic acid-assisted bromination activity toward monochlorodimedon when incubated with hydrogen peroxide and dihydrocoumarin or an organic acid, such as acetate and n-butyrate. In Acinetobacter calcoaceticus, this protein is Bifunctional esterase/perhydrolase DCH.